Consider the following 126-residue polypeptide: Fluoride-specific ion channel FluC 3 (126 aa).

The next 4 helical transmembrane spans lie at 7 to 27, 37 to 57, 68 to 87, and 101 to 121; these read MWVGLGGGIGSLLRWWIGLSI, LGTFLINISGAFVIGYLSILF, LMNTAVLTGILGGYTTFSSM, and AIAAGYLIISVLVGLAAAAFG. The Na(+) site is built by Gly79 and Thr82.

This sequence belongs to the fluoride channel Fluc/FEX (TC 1.A.43) family.

It localises to the cell inner membrane. The enzyme catalyses fluoride(in) = fluoride(out). With respect to regulation, na(+) is not transported, but it plays an essential structural role and its presence is essential for fluoride channel function. In terms of biological role, fluoride-specific ion channel. Important for reducing fluoride concentration in the cell, thus reducing its toxicity. This chain is Fluoride-specific ion channel FluC 3, found in Yersinia pestis.